The sequence spans 188 residues: ATP synthase subunit b (188 aa).

Residues 7-26 form a helical membrane-spanning segment; sequence TAAAGAMTLFFASMAYASGD.

This sequence belongs to the ATPase B chain family. As to quaternary structure, F-type ATPases have 2 components, F(1) - the catalytic core - and F(0) - the membrane proton channel. F(1) has five subunits: alpha(3), beta(3), gamma(1), delta(1), epsilon(1). F(0) has three main subunits: a(1), b(2) and c(10-14). The alpha and beta chains form an alternating ring which encloses part of the gamma chain. F(1) is attached to F(0) by a central stalk formed by the gamma and epsilon chains, while a peripheral stalk is formed by the delta and b chains.

It is found in the cell inner membrane. Functionally, f(1)F(0) ATP synthase produces ATP from ADP in the presence of a proton or sodium gradient. F-type ATPases consist of two structural domains, F(1) containing the extramembraneous catalytic core and F(0) containing the membrane proton channel, linked together by a central stalk and a peripheral stalk. During catalysis, ATP synthesis in the catalytic domain of F(1) is coupled via a rotary mechanism of the central stalk subunits to proton translocation. In terms of biological role, component of the F(0) channel, it forms part of the peripheral stalk, linking F(1) to F(0). The chain is ATP synthase subunit b from Nitratidesulfovibrio vulgaris (strain DP4) (Desulfovibrio vulgaris).